A 262-amino-acid polypeptide reads, in one-letter code: Indole-3-glycerol phosphate synthase (262 aa).

The protein belongs to the TrpC family.

The catalysed reaction is 1-(2-carboxyphenylamino)-1-deoxy-D-ribulose 5-phosphate + H(+) = (1S,2R)-1-C-(indol-3-yl)glycerol 3-phosphate + CO2 + H2O. Its pathway is amino-acid biosynthesis; L-tryptophan biosynthesis; L-tryptophan from chorismate: step 4/5. This is Indole-3-glycerol phosphate synthase from Nitratiruptor sp. (strain SB155-2).